We begin with the raw amino-acid sequence, 128 residues long: Ribosome-binding factor A (128 aa).

The protein belongs to the RbfA family. As to quaternary structure, monomer. Binds 30S ribosomal subunits, but not 50S ribosomal subunits or 70S ribosomes.

The protein localises to the cytoplasm. In terms of biological role, one of several proteins that assist in the late maturation steps of the functional core of the 30S ribosomal subunit. Associates with free 30S ribosomal subunits (but not with 30S subunits that are part of 70S ribosomes or polysomes). Required for efficient processing of 16S rRNA. May interact with the 5'-terminal helix region of 16S rRNA. The protein is Ribosome-binding factor A of Geobacillus thermodenitrificans (strain NG80-2).